A 467-amino-acid chain; its full sequence is Serum response factor homolog B (467 aa).

Residues 1 to 15 (MELNMNQYDNIESND) are compositionally biased toward polar residues. 3 disordered regions span residues 1–38 (MELN…KSGR), 115–245 (NTPD…NNLT), and 301–467 (IQNI…PSDL). In terms of domain architecture, MADS-box spans 36 to 96 (SGRRKINIEF…GHVYTFATPK (61 aa)). Over residues 128 to 205 (NNNNGNNSNN…NNNNNNNNNN (78 aa)) the composition is skewed to low complexity. Residues 206–220 (CKEEQNMNIPNERKS) show a composition bias toward basic and acidic residues. Composition is skewed to low complexity over residues 222–245 (NNIN…NNLT), 301–334 (IQNI…SNNI), 347–392 (GSNS…NSNN), and 401–440 (PSPI…YGGY). Residues 442–467 (QPFSRNYPLQSNIATNSTVSKAPSDL) are compositionally biased toward polar residues.

The protein localises to the nucleus. The chain is Serum response factor homolog B (srfB) from Dictyostelium discoideum (Social amoeba).